The sequence spans 291 residues: Malectin (291 aa).

The signal sequence occupies residues 1-30; the sequence is MLRPRGAEGTAVALLRLLLLLLLLGPKLRG. At 31–268 the chain is on the lumenal side; that stretch reads PGLGVVGAAG…TPNPYASDNS (238 aa). 5 residues coordinate a carbohydrate: Tyr81, Tyr103, Tyr130, Phe131, and Asp200. The disordered stretch occupies residues 220–264; sequence LQPHPGLEKKEEEEEEEEYDEGSNLKRQTNKNRVQSGPRTPNPYA. Positions 230-240 are enriched in acidic residues; that stretch reads EEEEEEEEYDE. A compositionally biased stretch (polar residues) spans 244–264; that stretch reads LKRQTNKNRVQSGPRTPNPYA. A glycan (N-linked (GlcNAc...) asparagine) is linked at Asn267. Residues 269-289 form a helical membrane-spanning segment; that stretch reads SLMFPILVAFGVFIPTLFCLC. Topologically, residues 290–291 are cytoplasmic; that stretch reads RL.

Belongs to the malectin family. Interacts with the oligosaccharyltransferase (OST) complex.

It localises to the endoplasmic reticulum membrane. Functionally, carbohydrate-binding protein with a strong ligand preference for Glc2-N-glycan. May play a role in the early steps of protein N-glycosylation. This is Malectin from Mus musculus (Mouse).